A 239-amino-acid chain; its full sequence is MLKNFMKNKKGAVGIGTLIIFIALVLVAAVAASVIINTAGKLQHKAAVVGQETTQQVASGLQVVKITGHSVDQYNLDKIAILVSPNIGDEIDLATTVVTFSTDDRKMSLLYDSSNASNGGKVRLSTANGTSDIFKYDDVYAIGAWPFEDPTYGQSDQDPNEKKFGIVVLQDMDNSVSGEHPTVNYGDKVLLAINIGNIVGENIGNRIRIQGEVVPEFGAPGIIDFTTPPVYANRVVALQ.

Residues 1–11 constitute a propeptide that is removed on maturation; it reads MLKNFMKNKKG. N-linked (GlcNAc...) asparagine glycans are attached at residues Asn115 and Asn128.

This sequence belongs to the archaeal flagellin family. In terms of processing, N-linked glycans consist of the 779 Da trisaccharide beta-ManNAc(Thr)-(1-4)-beta-GlcNAc3NAcA-(1-3)-beta-GlcNAc.

It is found in the archaeal flagellum. Functionally, flagellin is the subunit protein which polymerizes to form the filaments of archaeal flagella. The protein is Flagellin B3 (flaB3) of Methanococcus voltae.